A 1874-amino-acid polypeptide reads, in one-letter code: Protein TIC 214 (1874 aa).

6 helical membrane-spanning segments follow: residues 18 to 38 (IINSVVVVGLYYGFLTTFSIG), 64 to 84 (FITGQLMMFISIYYAPLHLAL), 87 to 107 (PHTITVLALPYLLFHFFWNNH), 124 to 144 (LSIQCVFLNNLIFQLFNYFIL), 172 to 192 (VGWLIGHILFMKWLGLVLVWI), and 221 to 241 (IFSILLFITCVYYLGRIPSPI). Disordered regions lie at residues 248-310 (ETSK…EIRV) and 1567-1624 (KTEC…NEED). A compositionally biased stretch (acidic residues) spans 255 to 268 (GVESEEEGDVEIET). Composition is skewed to basic and acidic residues over residues 298–310 (DSNKIDETEEIRV) and 1584–1601 (NQKEKETPADQEDLRSDA).

Belongs to the TIC214 family. In terms of assembly, part of the Tic complex.

Its subcellular location is the plastid. The protein resides in the chloroplast inner membrane. Involved in protein precursor import into chloroplasts. May be part of an intermediate translocation complex acting as a protein-conducting channel at the inner envelope. This chain is Protein TIC 214, found in Coffea arabica (Arabian coffee).